The sequence spans 986 residues: Translation initiation factor IF-2 (986 aa).

Residues Ser-47–Glu-388 are disordered. Positions Pro-53–Val-64 are enriched in basic and acidic residues. Residues Pro-78–Glu-94 show a composition bias toward low complexity. A compositionally biased stretch (basic and acidic residues) spans Ala-95–Lys-113. Composition is skewed to low complexity over residues Glu-127–Ala-141 and Ala-153–Ala-214. Basic and acidic residues-rich tracts occupy residues Lys-215–Thr-225 and Gly-268–Ala-278. Residues Pro-286 to Gly-300 are compositionally biased toward low complexity. A compositionally biased stretch (basic and acidic residues) spans Gly-358–Phe-374. The tr-type G domain occupies Lys-486–Glu-653. Residues Gly-495–Thr-502 form a G1 region. Gly-495–Thr-502 is a GTP binding site. The segment at Gly-520–His-524 is G2. A G3 region spans residues Asp-541–Gly-544. GTP contacts are provided by residues Asp-541 to His-545 and Asn-595 to Asp-598. The tract at residues Asn-595 to Asp-598 is G4. The interval Ser-631–Lys-633 is G5.

This sequence belongs to the TRAFAC class translation factor GTPase superfamily. Classic translation factor GTPase family. IF-2 subfamily.

The protein resides in the cytoplasm. One of the essential components for the initiation of protein synthesis. Protects formylmethionyl-tRNA from spontaneous hydrolysis and promotes its binding to the 30S ribosomal subunits. Also involved in the hydrolysis of GTP during the formation of the 70S ribosomal complex. The sequence is that of Translation initiation factor IF-2 from Citrifermentans bemidjiense (strain ATCC BAA-1014 / DSM 16622 / JCM 12645 / Bem) (Geobacter bemidjiensis).